We begin with the raw amino-acid sequence, 315 residues long: Aspartate carbamoyltransferase catalytic subunit (315 aa).

Carbamoyl phosphate contacts are provided by R64 and T65. K92 lines the L-aspartate pocket. R114, H142, and Q145 together coordinate carbamoyl phosphate. R176 and R230 together coordinate L-aspartate. G271 and P272 together coordinate carbamoyl phosphate.

Belongs to the aspartate/ornithine carbamoyltransferase superfamily. ATCase family. In terms of assembly, heterododecamer (2C3:3R2) of six catalytic PyrB chains organized as two trimers (C3), and six regulatory PyrI chains organized as three dimers (R2).

The enzyme catalyses carbamoyl phosphate + L-aspartate = N-carbamoyl-L-aspartate + phosphate + H(+). It functions in the pathway pyrimidine metabolism; UMP biosynthesis via de novo pathway; (S)-dihydroorotate from bicarbonate: step 2/3. Functionally, catalyzes the condensation of carbamoyl phosphate and aspartate to form carbamoyl aspartate and inorganic phosphate, the committed step in the de novo pyrimidine nucleotide biosynthesis pathway. The polypeptide is Aspartate carbamoyltransferase catalytic subunit (Lawsonia intracellularis (strain PHE/MN1-00)).